Here is a 96-residue protein sequence, read N- to C-terminus: Transcription and mRNA export factor ENY2 (96 aa).

It belongs to the ENY2 family. As to quaternary structure, component of the nuclear pore complex (NPC)-associated TREX-2 complex (transcription and export complex 2). Component of the SAGA transcription coactivator-HAT complex. Within the SAGA complex, participates in a subcomplex of SAGA called the DUB module (deubiquitination module).

The protein resides in the nucleus. It is found in the nucleoplasm. Its function is as follows. Involved in mRNA export coupled transcription activation by association with both the TREX-2 and the SAGA complexes. The transcription regulatory histone acetylation (HAT) complex SAGA is a multiprotein complex that activates transcription by remodeling chromatin and mediating histone acetylation and deubiquitination. Within the SAGA complex, participates in a subcomplex that specifically deubiquitinates histones. The SAGA complex is recruited to specific gene promoters by activators, where it is required for transcription. The TREX-2 complex functions in docking export-competent ribonucleoprotein particles (mRNPs) to the nuclear entrance of the nuclear pore complex (nuclear basket). TREX-2 participates in mRNA export and accurate chromatin positioning in the nucleus by tethering genes to the nuclear periphery. The chain is Transcription and mRNA export factor ENY2 from Taeniopygia guttata (Zebra finch).